Consider the following 362-residue polypeptide: UPF0324 membrane protein YPO1307/y2878/YP_1285 (362 aa).

9 helical membrane passes run 21–38 (YIPG…ALNV), 48–70 (GLGA…YPWL), 102–124 (VADV…FILA), 139–161 (VMLI…EPVL), 168–190 (VAVA…PWLY), 240–257 (MIRV…SAYL), 278–300 (WFAV…AVWV), 305–327 (TLDT…IGSI), and 334–356 (PLLL…NLFV).

The protein belongs to the UPF0324 family.

The protein resides in the cell membrane. This Yersinia pestis protein is UPF0324 membrane protein YPO1307/y2878/YP_1285.